A 436-amino-acid polypeptide reads, in one-letter code: Phosphomethylpyrimidine synthase (436 aa).

Substrate is bound by residues N68, M97, Y126, H166, 188–190, 229–232, and E268; these read SRG and DGFR. Zn(2+) is bound at residue H272. A substrate-binding site is contributed by Y295. H336 lines the Zn(2+) pocket. 3 residues coordinate [4Fe-4S] cluster: C412, C415, and C419.

It belongs to the ThiC family. Homodimer. It depends on [4Fe-4S] cluster as a cofactor.

It catalyses the reaction 5-amino-1-(5-phospho-beta-D-ribosyl)imidazole + S-adenosyl-L-methionine = 4-amino-2-methyl-5-(phosphooxymethyl)pyrimidine + CO + 5'-deoxyadenosine + formate + L-methionine + 3 H(+). Its pathway is cofactor biosynthesis; thiamine diphosphate biosynthesis. Catalyzes the synthesis of the hydroxymethylpyrimidine phosphate (HMP-P) moiety of thiamine from aminoimidazole ribotide (AIR) in a radical S-adenosyl-L-methionine (SAM)-dependent reaction. This is Phosphomethylpyrimidine synthase from Geobacter metallireducens (strain ATCC 53774 / DSM 7210 / GS-15).